A 455-amino-acid polypeptide reads, in one-letter code: Ribosomal protein uS12 methylthiotransferase RimO (455 aa).

Positions 10–120 (PKVGMVSLGC…VVEAVHDAAP (111 aa)) constitute an MTTase N-terminal domain. Residues Cys-19, Cys-55, Cys-84, Cys-151, Cys-155, and Cys-158 each contribute to the [4Fe-4S] cluster site. The Radical SAM core domain maps to 137 to 380 (LTPRHYSYLK…MAKTAAISAA (244 aa)). The TRAM domain maps to 383–455 (EAKIGRTLPV…DEHDLFGVVT (73 aa)).

This sequence belongs to the methylthiotransferase family. RimO subfamily. It depends on [4Fe-4S] cluster as a cofactor.

Its subcellular location is the cytoplasm. It catalyses the reaction L-aspartate(89)-[ribosomal protein uS12]-hydrogen + (sulfur carrier)-SH + AH2 + 2 S-adenosyl-L-methionine = 3-methylsulfanyl-L-aspartate(89)-[ribosomal protein uS12]-hydrogen + (sulfur carrier)-H + 5'-deoxyadenosine + L-methionine + A + S-adenosyl-L-homocysteine + 2 H(+). Its function is as follows. Catalyzes the methylthiolation of an aspartic acid residue of ribosomal protein uS12. This is Ribosomal protein uS12 methylthiotransferase RimO from Sphingopyxis alaskensis (strain DSM 13593 / LMG 18877 / RB2256) (Sphingomonas alaskensis).